Consider the following 426-residue polypeptide: DQTALYIRMLGDVRVRSRAGFETERRGSHPYIDFRIFHAQSEIEASVSARNIRRLLSFQRYLRSSRFFRGATVCRSLNILDEDYNGQAKCMLEKVGNWNFDIFLFDRLTNGNSLVSLTFHLFSLHGLIEYFHLDMVKLRRFLVMIQEDYHSQNPYHNAVHAADVTQAMHCYLKEPKLANSVTPWDILLSLIAAATHDLDHPGVNQPFLIKTNHYLATLYKNTSVLENHHWRSAVGLLRESGLFSHLPLESRHEMEAQIGALILATDISRQNEYLSLFRSHLDKGDLHLDDGRHRHLVLQMALKCADICNPCRNWELSKQWSEKVTEEFFHQGDIEKKYHLGVSPLCDRQTESIANIQIGFMTYLQEPLFTEWARFSDTRLSQTMLGHVGLNKASWKGLQRQQPSSEDASAAFELNSQLLTQENRLS.

Residues 80-402 (LDEDYNGQAK…ASWKGLQRQQ (323 aa)) enclose the PDEase domain. His-156 (proton donor) is an active-site residue. Positions 160, 196, 197, and 306 each coordinate a divalent metal cation.

It belongs to the cyclic nucleotide phosphodiesterase family. PDE7 subfamily. In terms of assembly, interacts with CBFA2T3. It depends on a divalent metal cation as a cofactor.

The protein resides in the cytoplasm. It is found in the cytosol. It carries out the reaction 3',5'-cyclic AMP + H2O = AMP + H(+). It functions in the pathway purine metabolism; 3',5'-cyclic AMP degradation; AMP from 3',5'-cyclic AMP: step 1/1. In terms of biological role, hydrolyzes the second messenger cAMP, which is a key regulator of many important physiological processes. May have a role in muscle signal transduction. This Rattus norvegicus (Rat) protein is High affinity 3',5'-cyclic-AMP phosphodiesterase 7A (Pde7a).